The following is a 239-amino-acid chain: 1-(5-phosphoribosyl)-5-[(5-phosphoribosylamino)methylideneamino] imidazole-4-carboxamide isomerase (239 aa).

Catalysis depends on Asp-8, which acts as the Proton acceptor. Asp-129 serves as the catalytic Proton donor.

It belongs to the HisA/HisF family.

Its subcellular location is the cytoplasm. It catalyses the reaction 1-(5-phospho-beta-D-ribosyl)-5-[(5-phospho-beta-D-ribosylamino)methylideneamino]imidazole-4-carboxamide = 5-[(5-phospho-1-deoxy-D-ribulos-1-ylimino)methylamino]-1-(5-phospho-beta-D-ribosyl)imidazole-4-carboxamide. Its pathway is amino-acid biosynthesis; L-histidine biosynthesis; L-histidine from 5-phospho-alpha-D-ribose 1-diphosphate: step 4/9. The polypeptide is 1-(5-phosphoribosyl)-5-[(5-phosphoribosylamino)methylideneamino] imidazole-4-carboxamide isomerase (Bacillus cytotoxicus (strain DSM 22905 / CIP 110041 / 391-98 / NVH 391-98)).